The chain runs to 426 residues: Serine hydroxymethyltransferase (426 aa).

(6S)-5,6,7,8-tetrahydrofolate-binding positions include leucine 118 and 122 to 124 (GHL). The residue at position 227 (lysine 227) is an N6-(pyridoxal phosphate)lysine.

Belongs to the SHMT family. Homodimer. The cofactor is pyridoxal 5'-phosphate.

The protein resides in the cytoplasm. The catalysed reaction is (6R)-5,10-methylene-5,6,7,8-tetrahydrofolate + glycine + H2O = (6S)-5,6,7,8-tetrahydrofolate + L-serine. Its pathway is one-carbon metabolism; tetrahydrofolate interconversion. It functions in the pathway amino-acid biosynthesis; glycine biosynthesis; glycine from L-serine: step 1/1. Functionally, catalyzes the reversible interconversion of serine and glycine with tetrahydrofolate (THF) serving as the one-carbon carrier. This reaction serves as the major source of one-carbon groups required for the biosynthesis of purines, thymidylate, methionine, and other important biomolecules. Also exhibits THF-independent aldolase activity toward beta-hydroxyamino acids, producing glycine and aldehydes, via a retro-aldol mechanism. The sequence is that of Serine hydroxymethyltransferase from Mycobacterium avium (strain 104).